The primary structure comprises 796 residues: Serine/threonine-protein kinase ATG1 (796 aa).

The Protein kinase domain occupies 9–304 (YVVGAEIGRG…FQEFFNDPVI (296 aa)). ATP is bound by residues 15 to 23 (IGRGSFANV) and K38. The Proton acceptor role is filled by D155. A compositionally biased stretch (acidic residues) spans 360–370 (LEEEDEEEDQD). Disordered regions lie at residues 360 to 382 (LEEE…IQHM), 389 to 408 (LLNK…RREL), and 450 to 480 (PYTR…KVPI). Residues 389-403 (LLNKTTQKQTEVQSQ) are compositionally biased toward polar residues. A compositionally biased stretch (low complexity) spans 453–470 (RRYSSSSRSSSTGSNQRR).

This sequence belongs to the protein kinase superfamily. Ser/Thr protein kinase family. APG1/unc-51/ULK1 subfamily. In terms of assembly, homodimer. Forms a ternary complex with ATG13 and ATG17.

The protein resides in the cytoplasm. Its subcellular location is the preautophagosomal structure membrane. It carries out the reaction L-seryl-[protein] + ATP = O-phospho-L-seryl-[protein] + ADP + H(+). It catalyses the reaction L-threonyl-[protein] + ATP = O-phospho-L-threonyl-[protein] + ADP + H(+). Functionally, serine/threonine protein kinase involved in the cytoplasm to vacuole transport (Cvt) and found to be essential in autophagy, where it is required for the formation of autophagosomes. Involved in the clearance of protein aggregates which cannot be efficiently cleared by the proteasome. Required for selective autophagic degradation of the nucleus (nucleophagy) as well as for mitophagy which contributes to regulate mitochondrial quantity and quality by eliminating the mitochondria to a basal level to fulfill cellular energy requirements and preventing excess ROS production. Also involved in endoplasmic reticulum-specific autophagic process, in selective removal of ER-associated degradation (ERAD) substrates. Plays a key role in ATG9 and ATG23 cycling through the pre-autophagosomal structure and is necessary to promote ATG18 binding to ATG9 through phosphorylation of ATG9. Catalyzes phosphorylation of ATG4, decreasing the interaction between ATG4 and ATG8 and impairing deconjugation of PE-conjugated forms of ATG8. The sequence is that of Serine/threonine-protein kinase ATG1 from Komagataella pastoris (Yeast).